The primary structure comprises 412 residues: Peptide chain release factor subunit 1 (412 aa).

Belongs to the eukaryotic release factor 1 family. In terms of assembly, heterodimer of two subunits, one of which binds GTP.

Its subcellular location is the cytoplasm. Functionally, directs the termination of nascent peptide synthesis (translation) in response to the termination codons UAA, UAG and UGA. The chain is Peptide chain release factor subunit 1 from Methanobrevibacter smithii (strain ATCC 35061 / DSM 861 / OCM 144 / PS).